Here is a 351-residue protein sequence, read N- to C-terminus: Geranylgeranyl pyrophosphate synthase (351 aa).

Residues Lys55, Arg58, and Gln93 each contribute to the isopentenyl diphosphate site. Residues Asp100 and Asp104 each contribute to the Mg(2+) site. Residue Arg109 participates in dimethylallyl diphosphate binding. Arg110 contributes to the isopentenyl diphosphate binding site. Residues Lys196, Thr197, Gln236, Lys253, and Lys262 each coordinate dimethylallyl diphosphate.

This sequence belongs to the FPP/GGPP synthase family. Interacts with fps1. Mg(2+) is required as a cofactor.

Its subcellular location is the cytoplasm. It localises to the nucleus. The catalysed reaction is isopentenyl diphosphate + dimethylallyl diphosphate = (2E)-geranyl diphosphate + diphosphate. The enzyme catalyses isopentenyl diphosphate + (2E)-geranyl diphosphate = (2E,6E)-farnesyl diphosphate + diphosphate. It carries out the reaction isopentenyl diphosphate + (2E,6E)-farnesyl diphosphate = (2E,6E,10E)-geranylgeranyl diphosphate + diphosphate. It participates in isoprenoid biosynthesis; farnesyl diphosphate biosynthesis; farnesyl diphosphate from geranyl diphosphate and isopentenyl diphosphate: step 1/1. It functions in the pathway isoprenoid biosynthesis; geranyl diphosphate biosynthesis; geranyl diphosphate from dimethylallyl diphosphate and isopentenyl diphosphate: step 1/1. Its pathway is isoprenoid biosynthesis; geranylgeranyl diphosphate biosynthesis; geranylgeranyl diphosphate from farnesyl diphosphate and isopentenyl diphosphate: step 1/1. In terms of biological role, catalyzes the trans-addition of the 3 molecules of IPP onto DMAPP to form geranylgeranyl pyrophosphate. Required for the membrane attachment of ypt7 and rhb1. May be involved in vesicle trafficking and protein sorting. Required for forespore membrane formation. This Schizosaccharomyces pombe (strain 972 / ATCC 24843) (Fission yeast) protein is Geranylgeranyl pyrophosphate synthase (spo9).